A 449-amino-acid chain; its full sequence is Sensor protein QseC (449 aa).

Over 1–12 the chain is Cytoplasmic; it reads MKFTQRLSLRVR. A helical transmembrane segment spans residues 13–33; the sequence is LTLIFLILASVTWLLSSFVAW. At 34-156 the chain is on the periplasmic side; the sequence is KQTTDNVDEL…QEWEYREDMA (123 aa). A helical membrane pass occupies residues 157-177; that stretch reads LAIVAGQLIPWLVALPVMLII. The Cytoplasmic portion of the chain corresponds to 178 to 449; it reads MMVLLGRELA…QGGFEAKVSW (272 aa). One can recognise a Histidine kinase domain in the interval 243–449; that stretch reads DAAHELRSPL…QGGFEAKVSW (207 aa). A Phosphohistidine; by autocatalysis modification is found at histidine 246.

The protein resides in the cell inner membrane. It carries out the reaction ATP + protein L-histidine = ADP + protein N-phospho-L-histidine.. Functionally, member of a two-component regulatory system QseB/QseC. Activates the flagella regulon by activating transcription of FlhDC. May activate QseB by phosphorylation. This is Sensor protein QseC (qseC) from Escherichia coli O157:H7.